The chain runs to 205 residues: Holliday junction branch migration complex subunit RuvA (205 aa).

The domain I stretch occupies residues 1-64; it reads MIGKLKGVVD…EDMIRLYGFR (64 aa). The interval 65 to 143 is domain II; sequence SDAEREWFRL…AFAPVDPALI (79 aa). Residues 144–152 are flexible linker; the sequence is RLAGAVEER. The segment at 153-205 is domain III; sequence TAPQPVADAISALVNLGYPQIQASAAVAAALQGAGEGAEAKTLIRLGLRELAR.

This sequence belongs to the RuvA family. Homotetramer. Forms an RuvA(8)-RuvB(12)-Holliday junction (HJ) complex. HJ DNA is sandwiched between 2 RuvA tetramers; dsDNA enters through RuvA and exits via RuvB. An RuvB hexamer assembles on each DNA strand where it exits the tetramer. Each RuvB hexamer is contacted by two RuvA subunits (via domain III) on 2 adjacent RuvB subunits; this complex drives branch migration. In the full resolvosome a probable DNA-RuvA(4)-RuvB(12)-RuvC(2) complex forms which resolves the HJ.

Its subcellular location is the cytoplasm. The RuvA-RuvB-RuvC complex processes Holliday junction (HJ) DNA during genetic recombination and DNA repair, while the RuvA-RuvB complex plays an important role in the rescue of blocked DNA replication forks via replication fork reversal (RFR). RuvA specifically binds to HJ cruciform DNA, conferring on it an open structure. The RuvB hexamer acts as an ATP-dependent pump, pulling dsDNA into and through the RuvAB complex. HJ branch migration allows RuvC to scan DNA until it finds its consensus sequence, where it cleaves and resolves the cruciform DNA. The chain is Holliday junction branch migration complex subunit RuvA from Methylobacterium nodulans (strain LMG 21967 / CNCM I-2342 / ORS 2060).